The sequence spans 374 residues: Mitochondrial import inner membrane translocase subunit tim50 (374 aa).

The N-terminal 48 residues, 1–48 (MILNKVAKCYGKQIGFFGNKTTQFIKPNQTIFLIGGTKRLFTTQQQQS), are a transit peptide targeting the mitochondrion. A disordered region spans residues 42-97 (TTQQQQSPKKEEPKSEQQKKVEDKTEEKEKEKDEEENENEKEKENEDGEGQKKKSK). Composition is skewed to basic and acidic residues over residues 49–72 (PKKE…KEKE) and 81–93 (EKEK…EGQK). The helical transmembrane segment at 103 to 125 (IVTSVTSTFFAGVLVASTFGYLT) threads the bilayer. Positions 191-332 (PGGKKYTLVI…IELLPVLESF (142 aa)) constitute an FCP1 homology domain.

The protein belongs to the TIM50 family. Component of the mitochondrial import inner membrane translocase complex.

It is found in the mitochondrion inner membrane. Functionally, component of the mitochondrial import inner membrane translocase that mediates the translocation of transit peptide-containing proteins across the mitochondrial inner membrane. The protein is Mitochondrial import inner membrane translocase subunit tim50 (timm50) of Dictyostelium discoideum (Social amoeba).